The primary structure comprises 329 residues: DNA-directed RNA polymerase subunit alpha (329 aa).

The interval 1–234 is alpha N-terminal domain (alpha-NTD); that stretch reads MQGSVTEFLK…EQLDAFVELR (234 aa). An alpha C-terminal domain (alpha-CTD) region spans residues 248 to 329; the sequence is FDPILLRPVD…WPPASLVDDL (82 aa).

The protein belongs to the RNA polymerase alpha chain family. In terms of assembly, homodimer. The RNAP catalytic core consists of 2 alpha, 1 beta, 1 beta' and 1 omega subunit. When a sigma factor is associated with the core the holoenzyme is formed, which can initiate transcription.

The catalysed reaction is RNA(n) + a ribonucleoside 5'-triphosphate = RNA(n+1) + diphosphate. DNA-dependent RNA polymerase catalyzes the transcription of DNA into RNA using the four ribonucleoside triphosphates as substrates. The sequence is that of DNA-directed RNA polymerase subunit alpha from Shewanella denitrificans (strain OS217 / ATCC BAA-1090 / DSM 15013).